The sequence spans 128 residues: Small ribosomal subunit protein uS14m (128 aa).

It belongs to the universal ribosomal protein uS14 family. As to quaternary structure, component of the mitochondrial ribosome small subunit (28S) which comprises a 12S rRNA and about 30 distinct proteins. Interacts with LIAT1.

The protein localises to the mitochondrion. The protein is Small ribosomal subunit protein uS14m (MRPS14) of Bos taurus (Bovine).